We begin with the raw amino-acid sequence, 629 residues long: Arginyl-tRNA--protein transferase 1 (629 aa).

Disordered stretches follow at residues Q274 to P298 and P353 to E405. The span at T282–T295 shows a compositional bias: low complexity. The segment covering S356–N396 has biased composition (acidic residues).

Belongs to the R-transferase family.

It catalyses the reaction an N-terminal L-alpha-aminoacyl-[protein] + L-arginyl-tRNA(Arg) = an N-terminal L-arginyl-L-aminoacyl-[protein] + tRNA(Arg) + H(+). Functionally, involved in the post-translational conjugation of arginine to the N-terminal aspartate or glutamate of a protein. This arginylation is required for degradation of the protein via the ubiquitin pathway. Does not arginylate cysteine residues. The chain is Arginyl-tRNA--protein transferase 1 (ate1) from Dictyostelium discoideum (Social amoeba).